A 361-amino-acid polypeptide reads, in one-letter code: Ribosomal RNA large subunit methyltransferase M (361 aa).

S-adenosyl-L-methionine-binding positions include serine 187, 220–223, aspartate 239, aspartate 259, and aspartate 276; that span reads CPGG. The Proton acceptor role is filled by lysine 305.

This sequence belongs to the class I-like SAM-binding methyltransferase superfamily. RNA methyltransferase RlmE family. RlmM subfamily. Monomer.

It localises to the cytoplasm. It carries out the reaction cytidine(2498) in 23S rRNA + S-adenosyl-L-methionine = 2'-O-methylcytidine(2498) in 23S rRNA + S-adenosyl-L-homocysteine + H(+). Its function is as follows. Catalyzes the 2'-O-methylation at nucleotide C2498 in 23S rRNA. In Shewanella oneidensis (strain ATCC 700550 / JCM 31522 / CIP 106686 / LMG 19005 / NCIMB 14063 / MR-1), this protein is Ribosomal RNA large subunit methyltransferase M.